A 424-amino-acid polypeptide reads, in one-letter code: GTPase Obg (424 aa).

Residues 1–159 (MVFIDTARIY…MWVRLELKLL (159 aa)) form the Obg domain. One can recognise an OBG-type G domain in the interval 160 to 330 (ADVGLVGFPN…LLDKTIEILS (171 aa)). GTP-binding positions include 166–173 (GFPNAGKS), 191–195 (FTTLT), 212–215 (DIPG), 282–285 (NKMD), and 311–313 (SAL). Positions 173 and 193 each coordinate Mg(2+). In terms of domain architecture, OCT spans 347 to 424 (NPPEEEETLE…VRDFEFEYYE (78 aa)).

It belongs to the TRAFAC class OBG-HflX-like GTPase superfamily. OBG GTPase family. Monomer. Mg(2+) serves as cofactor.

It localises to the cytoplasm. In terms of biological role, an essential GTPase which binds GTP, GDP and possibly (p)ppGpp with moderate affinity, with high nucleotide exchange rates and a fairly low GTP hydrolysis rate. Plays a role in control of the cell cycle, stress response, ribosome biogenesis and in those bacteria that undergo differentiation, in morphogenesis control. The protein is GTPase Obg of Caldanaerobacter subterraneus subsp. tengcongensis (strain DSM 15242 / JCM 11007 / NBRC 100824 / MB4) (Thermoanaerobacter tengcongensis).